Reading from the N-terminus, the 503-residue chain is Aspartyl/glutamyl-tRNA(Asn/Gln) amidotransferase subunit B (503 aa).

This sequence belongs to the GatB/GatE family. GatB subfamily. Heterotrimer of A, B and C subunits.

The enzyme catalyses L-glutamyl-tRNA(Gln) + L-glutamine + ATP + H2O = L-glutaminyl-tRNA(Gln) + L-glutamate + ADP + phosphate + H(+). The catalysed reaction is L-aspartyl-tRNA(Asn) + L-glutamine + ATP + H2O = L-asparaginyl-tRNA(Asn) + L-glutamate + ADP + phosphate + 2 H(+). Functionally, allows the formation of correctly charged Asn-tRNA(Asn) or Gln-tRNA(Gln) through the transamidation of misacylated Asp-tRNA(Asn) or Glu-tRNA(Gln) in organisms which lack either or both of asparaginyl-tRNA or glutaminyl-tRNA synthetases. The reaction takes place in the presence of glutamine and ATP through an activated phospho-Asp-tRNA(Asn) or phospho-Glu-tRNA(Gln). This Rhodococcus jostii (strain RHA1) protein is Aspartyl/glutamyl-tRNA(Asn/Gln) amidotransferase subunit B.